The chain runs to 438 residues: GDP-mannose 6-dehydrogenase (438 aa).

The NAD(+) site is built by Y10, V11, D30, K35, T86, and T124. GDP-alpha-D-mannuronate contacts are provided by E161, K210, N214, H217, N225, Y256, Y257, R259, F262, and G265. C268 is an active-site residue. Position 271 (K271) interacts with NAD(+). K324 is a binding site for GDP-alpha-D-mannuronate. R331 provides a ligand contact to NAD(+).

This sequence belongs to the UDP-glucose/GDP-mannose dehydrogenase family.

The catalysed reaction is GDP-alpha-D-mannose + 2 NAD(+) + H2O = GDP-alpha-D-mannuronate + 2 NADH + 3 H(+). It functions in the pathway glycan biosynthesis; alginate biosynthesis. Its function is as follows. Catalyzes the oxidation of guanosine diphospho-D-mannose (GDP-D-mannose) to GDP-D-mannuronic acid, a precursor for alginate polymerization. The alginate layer causes a mucoid phenotype and provides a protective barrier against host immune defenses and antibiotics. In Pseudomonas savastanoi pv. phaseolicola (Pseudomonas syringae pv. phaseolicola), this protein is GDP-mannose 6-dehydrogenase (algD).